The chain runs to 1909 residues: Endoribonuclease Dicer homolog 1 (1909 aa).

The segment at 99-177 (TVKENGLQKN…NNKKKRECNN (79 aa)) is disordered. Over residues 110-124 (GKRDEFSKEEGDKDR) the composition is skewed to basic and acidic residues. Over residues 131-146 (SYQSERSNLSGRGHVN) the composition is skewed to polar residues. Positions 147 to 177 (NSREGDRFMNRKRTRNWDEAGNNKKKRECNN) are enriched in basic and acidic residues. One can recognise a Helicase ATP-binding domain in the interval 256-433 (VLEQAKAKNT…QVDCAIKIRN (178 aa)). 269–276 (LETGAGKT) is an ATP binding site. The short motif at 378 to 381 (DECH) is the DECH box element. Positions 651-812 (SLIKLLLKYQ…RTDLSHLKDT (162 aa)) constitute a Helicase C-terminal domain. Residues 840 to 935 (AVGLVHFYCS…LPDKGSGQDA (96 aa)) form the Dicer dsRNA-binding fold domain. Residues 929–952 (KGSGQDAEKADQDDEGEPVPGTAR) form a disordered region. A PAZ domain is found at 1189 to 1318 (EVEEDLSKGK…LPPELCVVHP (130 aa)). RNase III domains are found at residues 1342–1518 (LAVQ…VEGG) and 1559–1707 (FVGL…LDSG). Mg(2+) contacts are provided by glutamate 1597, aspartate 1693, and glutamate 1696. DRBM domains lie at 1733–1796 (HPVR…ALKE) and 1831–1906 (FTRQ…LLNK). The interval 1801–1831 (ESKEKHINNGNAGEDQGENENGNKKNGHQPF) is disordered.

This sequence belongs to the helicase family. Dicer subfamily. As to quaternary structure, interacts (via N-terminus) with DDL. Interacts (via DRBM domains) with DRB1, DRB2 and DRB5. May interact with AGO1 or AGO10 through their common PAZ domains. It depends on Mg(2+) as a cofactor. The cofactor is Mn(2+). In terms of tissue distribution, highly expressed in flowers and seeds and detected in leaves and stems. Found in ovule integuments, inflorescence and floral meristems, stigma of flowers until just before pollination, vasculature of the funiculus, and embryo.

The protein resides in the nucleus. Functionally, ribonuclease (RNase) III involved in RNA-mediated post-transcriptional gene silencing (PTGS). Functions in the microRNAs (miRNAs) biogenesis pathway by cleaving primary miRNAs (pri-miRNAs) and precursor miRNAs (pre-miRNAs). Functions with DRB1/HYL1 and SERRATE proteins for accurate pri-miRNAs to miRNAs processing. Indirectly involved in the production of trans-acting small interfering RNAs (ta-siRNAs) derived from the TAS1, TAS2 or TAS3 endogenous transcripts by participating in the production of their initiating miRNAs. Involved in the processing of natural siRNAs (nat-siRNAs, derived from cis-natural antisense transcripts) by cleaving 24 nucleotide nat-siRNAs into 21 nucleotide nat-siRNAs. Can produce RDR6-dependent endogenous ta-siRNAs derived from TAS1 and TAS2. Required for the production of 30-40 nucleotide bacterial-induced long siRNAs (lsiRNA). Acts redundantly with DICER-LIKE 3 (DCL3) to promote flowering via repression of FLOWERING LOCUS C (FLC). Represses antiviral RNA silencing through negative regulation of the expression of DCL4 and DCL3. This is Endoribonuclease Dicer homolog 1 (DCL1) from Arabidopsis thaliana (Mouse-ear cress).